A 337-amino-acid polypeptide reads, in one-letter code: Protein EXORDIUM-like 3 (337 aa).

A signal peptide spans 1 to 25 (MHSLPVNLVLTVLTVFLTSPAQVIG). N-linked (GlcNAc...) asparagine glycosylation is found at Asn34, Asn66, and Asn119.

This sequence belongs to the EXORDIUM family.

The protein resides in the secreted. Its subcellular location is the extracellular space. The protein localises to the apoplast. Its function is as follows. May play a role in a brassinosteroid-dependent regulation of growth and development. The sequence is that of Protein EXORDIUM-like 3 (EXL3) from Arabidopsis thaliana (Mouse-ear cress).